Reading from the N-terminus, the 141-residue chain is Hemoglobin subunit alpha (141 aa).

Residues 1–141 enclose the Globin domain; the sequence is VLSPADKSNV…VSTVLTSKYR (141 aa). Serine 3 carries the post-translational modification Phosphoserine. Residues lysine 7 and lysine 11 each carry the N6-succinyllysine modification. Position 16 is an N6-acetyllysine; alternate (lysine 16). N6-succinyllysine; alternate is present on lysine 16. At tyrosine 24 the chain carries Phosphotyrosine. A Phosphoserine modification is found at serine 35. At lysine 40 the chain carries N6-succinyllysine. Serine 49 bears the Phosphoserine mark. Residue histidine 58 coordinates O2. Histidine 87 contributes to the heme b binding site. Serine 102 is subject to Phosphoserine. Threonine 108 is subject to Phosphothreonine. Residues serine 124 and serine 131 each carry the phosphoserine modification. Threonine 134 and threonine 137 each carry phosphothreonine. The residue at position 138 (serine 138) is a Phosphoserine.

It belongs to the globin family. In terms of assembly, heterotetramer of two alpha chains and two beta chains. Red blood cells.

Its function is as follows. Involved in oxygen transport from the lung to the various peripheral tissues. Hemopressin acts as an antagonist peptide of the cannabinoid receptor CNR1. Hemopressin-binding efficiently blocks cannabinoid receptor CNR1 and subsequent signaling. The chain is Hemoglobin subunit alpha (HBA) from Mico argentatus (Silvery marmoset).